The sequence spans 923 residues: Neuropilin-1 (923 aa).

Residues 1–21 (MERGLPLLCATLALALALAGA) form the signal peptide. Over 22–856 (FRSDKCGGTI…PGNVLKTLDP (835 aa)) the chain is Extracellular. Intrachain disulfides connect C27–C54, C82–C104, and C147–C173. CUB domains lie at 27–141 (CGGT…YEIF) and 147–265 (CSQN…YSVL). N-linked (GlcNAc...) asparagine glycosylation occurs at N150. Ca(2+) is bound by residues E195, D209, and D250. A disulfide bridge links C206 with C228. N261, N300, and N522 each carry an N-linked (GlcNAc...) asparagine glycan. Intrachain disulfides connect C275/C424 and C431/C583. 2 F5/8 type C domains span residues 275–424 (CMEA…VYGC) and 431–583 (CSGM…LLGC). O-linked (Xyl...) (chondroitin sulfate) serine; alternate glycosylation is present at S612. A glycan (O-linked (Xyl...) (heparan sulfate) serine; alternate) is linked at S612. Residues 645 to 811 (TYGFNCEFGW…NHISQEDCAK (167 aa)) enclose the MAM domain. The segment at 820–845 (TEIKIDETGSTPGYEGEGEGDKNISR) is disordered. S829 carries O-linked (Xyl...) (chondroitin sulfate) serine glycosylation. The N-linked (GlcNAc...) asparagine glycan is linked to N842. The helical transmembrane segment at 857 to 879 (ILITIIAMSALGVLLGAVCGVVL) threads the bilayer. Over 880–923 (YCACWHNGMSERNLSALENYNFELVDGVKLKKDKLNPQSNYSEA) the chain is Cytoplasmic. A Phosphoserine modification is found at S894.

This sequence belongs to the neuropilin family. Homodimer, and heterodimer with NRP2. Binds PLXNB1. Interacts with FER. Interacts with VEGFA. Interacts with ABCB8/MITOSUR in mitochondria. As to expression, nervous system.

It is found in the mitochondrion membrane. The protein resides in the cell membrane. It localises to the cytoplasm. In terms of biological role, receptor involved in the development of the cardiovascular system, in angiogenesis, in the formation of certain neuronal circuits and in organogenesis outside the nervous system. Mediates the chemorepulsant activity of semaphorins. Recognizes a C-end rule (CendR) motif R/KXXR/K on its ligands which causes cellular internalization and vascular leakage. Binds to semaphorin 3A (SEMA3A), the PLGF-2 isoform of PGF, the VEGF165 isoform of VEGFA and VEGFB. Coexpression with KDR results in increased VEGF165 binding to KDR as well as increased chemotaxis. Regulates VEGF-induced angiogenesis. Binding to VEGFA initiates a signaling pathway needed for motor neuron axon guidance and cell body migration, including for the caudal migration of facial motor neurons from rhombomere 4 to rhombomere 6 during embryonic development. Regulates mitochondrial iron transport via interaction with ABCB8/MITOSUR. The sequence is that of Neuropilin-1 from Mus musculus (Mouse).